Here is a 333-residue protein sequence, read N- to C-terminus: Acetyl-coenzyme A carboxylase carboxyl transferase subunit alpha (333 aa).

Residues 48–308 enclose the CoA carboxyltransferase C-terminal domain; sequence ALEVKVETLR…KEMLIEELRI (261 aa).

This sequence belongs to the AccA family. As to quaternary structure, acetyl-CoA carboxylase is a heterohexamer composed of biotin carboxyl carrier protein (AccB), biotin carboxylase (AccC) and two subunits each of ACCase subunit alpha (AccA) and ACCase subunit beta (AccD).

The protein localises to the cytoplasm. The catalysed reaction is N(6)-carboxybiotinyl-L-lysyl-[protein] + acetyl-CoA = N(6)-biotinyl-L-lysyl-[protein] + malonyl-CoA. It functions in the pathway lipid metabolism; malonyl-CoA biosynthesis; malonyl-CoA from acetyl-CoA: step 1/1. Functionally, component of the acetyl coenzyme A carboxylase (ACC) complex. First, biotin carboxylase catalyzes the carboxylation of biotin on its carrier protein (BCCP) and then the CO(2) group is transferred by the carboxyltransferase to acetyl-CoA to form malonyl-CoA. The protein is Acetyl-coenzyme A carboxylase carboxyl transferase subunit alpha of Chlorobium phaeobacteroides (strain DSM 266 / SMG 266 / 2430).